Consider the following 308-residue polypeptide: Neurexophilin-4 (308 aa).

The signal sequence occupies residues 1 to 23 (MRLLPEWFLLLFGPWLLRKAVSA). The interval 24–84 (QIPESGRPQY…GALARAGAAG (61 aa)) is II. Positions 40 to 51 (AAGAGAPGQQLP) are enriched in low complexity. The tract at residues 40 to 59 (AAGAGAPGQQLPEPRSSDGL) is disordered. N-linked (GlcNAc...) asparagine glycosylation is found at Asn72, Asn133, Asn143, and Asn149. An III region spans residues 85-163 (ALPAQRTKRK…IVPPSKRVEF (79 aa)). The segment at 164–224 (GGVWLPGPVP…PLGGALGVPG (61 aa)) is IV (linker domain). The segment at 225–308 (AKESRAFNCH…NFQSEHPYFG (84 aa)) is v (Cys-rich).

The protein belongs to the neurexophilin family. May be proteolytically processed at the boundary between the N-terminal non-conserved and the central conserved domain in neuron-like cells. Expressed in brain, spleen, and testis.

It is found in the secreted. Its function is as follows. May be signaling molecules that resemble neuropeptides and that act by binding to alpha-neurexins and possibly other receptors. The protein is Neurexophilin-4 (NXPH4) of Homo sapiens (Human).